The sequence spans 375 residues: UDP-N-acetylglucosamine--N-acetylmuramyl-(pentapeptide) pyrophosphoryl-undecaprenol N-acetylglucosamine transferase (375 aa).

Residues 13–15 (TGG), Asn124, Arg165, Ser193, and Gln294 contribute to the UDP-N-acetyl-alpha-D-glucosamine site.

The protein belongs to the glycosyltransferase 28 family. MurG subfamily.

The protein resides in the cell inner membrane. It catalyses the reaction di-trans,octa-cis-undecaprenyl diphospho-N-acetyl-alpha-D-muramoyl-L-alanyl-D-glutamyl-meso-2,6-diaminopimeloyl-D-alanyl-D-alanine + UDP-N-acetyl-alpha-D-glucosamine = di-trans,octa-cis-undecaprenyl diphospho-[N-acetyl-alpha-D-glucosaminyl-(1-&gt;4)]-N-acetyl-alpha-D-muramoyl-L-alanyl-D-glutamyl-meso-2,6-diaminopimeloyl-D-alanyl-D-alanine + UDP + H(+). It functions in the pathway cell wall biogenesis; peptidoglycan biosynthesis. Cell wall formation. Catalyzes the transfer of a GlcNAc subunit on undecaprenyl-pyrophosphoryl-MurNAc-pentapeptide (lipid intermediate I) to form undecaprenyl-pyrophosphoryl-MurNAc-(pentapeptide)GlcNAc (lipid intermediate II). This is UDP-N-acetylglucosamine--N-acetylmuramyl-(pentapeptide) pyrophosphoryl-undecaprenol N-acetylglucosamine transferase from Mesorhizobium japonicum (strain LMG 29417 / CECT 9101 / MAFF 303099) (Mesorhizobium loti (strain MAFF 303099)).